The primary structure comprises 388 residues: Trans-enoyl reductase tenC (388 aa).

51–54 is an NADP(+) binding site; the sequence is VDGK. A substrate-binding site is contributed by 142-149; sequence VGVASVGM. Residues 219 to 222, Y237, and 284 to 285 each bind NADP(+); these read SSES and LD. Substrate is bound at residue 304-308; the sequence is SFTQF. Position 373-374 (373-374) interacts with NADP(+); it reads IK.

This sequence belongs to the zinc-containing alcohol dehydrogenase family. As to quaternary structure, monomer.

Its pathway is secondary metabolite biosynthesis. Trans-enoyl reductase; part of the gene cluster that mediates the biosynthesis of tenellin-type 2-pyridones, iron-chelating compounds involved in iron stress tolerance, competition with the natural competitor fungus Metarhizium robertsii and insect hosts infection. TenC collaborates with the hybrid PKS-NRPS synthetase tenS to catalyze the assembly of the polyketide-amino acid backbone, since tenS lacks a designated enoylreductase (ER) domain. Upon formation of the polyketide backbone on the thiotemplate of tenS, the triketide is transferred to the NRPS module and linked to tyrosine to produce the pyrrolidine-2-dione intermediates, including pretellinin A, 11-hydropretellenin A, 12-hydropretellenin A, 13-hydropretellenin A, 14-hydropretellenin A, 12-oxopretellenin A and prototellinin D. The pathway begins with the assembly of the polyketide-amino acid backbone by the hybrid PKS-NRPS tenS with the help of the enoyl reductase tenC. These enzymes catalyze the synthesis of the pyrrolidine-2-dione intermediates pretellinin A, 11-hydropretellenin A, 12-hydropretellenin A, 13-hydropretellenin A, 14-hydropretellenin A, 12-oxopretellenin A and prototellinin D. The cytochrome P450 monooxygenase tenA then catalyzes an oxidative ring expansion of pretenellin A and 14-hydropretellenin A to form the 2-pyridone core, leading to pretenellin B and pyridovericin, respectively. The cytochrome P450 monooxygenase tenB is then required for the selective N-hydroxylation of the 2-pyridone nitrogen of yield tellinin and 15-hydroxytellenin (15-HT), respectively. The UDP-glucosyltransferase GT1 and the methyltransferase MT1, located outside the tenS gene cluster, contribute to the stepwise glycosylation and methylation of 15-HT to obtain the glycoside pyridovericin-N-O-(4-O-methyl-beta-D-glucopyranoside) (PMGP). Additional related compounds such as 1-O-methyl-15-HT, (8Z)-1-O-methyl-15-HT, and O-methyltenellin A are also produced but the enzymes involved in their biosynthesis have still to be determined. This is Trans-enoyl reductase tenC from Beauveria bassiana (White muscardine disease fungus).